We begin with the raw amino-acid sequence, 185 residues long: MNSDLTSFDKIEQKIDGSRKISNYIIGGMLTIGGIGFLLASISSYTGRDLLPLGNPSALLFIPQGIIMGAYGVIANLLNFYLWYMVYINFGSGSNSFDKSSKSVEIKRKGLFKDIEVRLDFDEIKSVKLDISEGFNPRRRIALVIKGRKKPLPISGAGELKPLLQVEEEGARLAKFLNVNLEGLK.

Transmembrane regions (helical) follow at residues 24–44 and 58–78; these read YIIGGMLTIGGIGFLLASISS and ALLFIPQGIIMGAYGVIANLL.

It belongs to the Ycf4 family.

Its subcellular location is the cellular thylakoid membrane. Functionally, seems to be required for the assembly of the photosystem I complex. In Prochlorococcus marinus (strain MIT 9215), this protein is Photosystem I assembly protein Ycf4.